The following is an 85-amino-acid chain: U4-theraphotoxin-Hhn1ab (85 aa).

The first 22 residues, 1–22, serve as a signal peptide directing secretion; sequence MKVTLIAILTCAAVLVLHTTAA. The propeptide occupies 23 to 48; the sequence is EELEAESQLMEVGMPDTELAAVDEER. Disulfide bonds link cysteine 56-cysteine 77 and cysteine 71-cysteine 82.

It belongs to the neurotoxin 12 (Hwtx-2) family. 02 (Hwtx-2) subfamily. Expressed by the venom gland.

The protein localises to the secreted. Functionally, postsynaptic neurotoxin. In Cyriopagopus hainanus (Chinese bird spider), this protein is U4-theraphotoxin-Hhn1ab.